A 441-amino-acid polypeptide reads, in one-letter code: Arginine biosynthesis bifunctional protein ArgJ, mitochondrial (441 aa).

Residues T177, K204, T215, E301, N436, and S441 each coordinate substrate. Residue T215 is the Nucleophile of the active site.

This sequence belongs to the ArgJ family. As to quaternary structure, heterodimer of an alpha and a beta chain. The alpha and beta chains are autoproteolytically processed from a single precursor protein within the mitochondrion.

Its subcellular location is the mitochondrion matrix. The enzyme catalyses N(2)-acetyl-L-ornithine + L-glutamate = N-acetyl-L-glutamate + L-ornithine. The catalysed reaction is L-glutamate + acetyl-CoA = N-acetyl-L-glutamate + CoA + H(+). It functions in the pathway amino-acid biosynthesis; L-arginine biosynthesis; L-ornithine and N-acetyl-L-glutamate from L-glutamate and N(2)-acetyl-L-ornithine (cyclic): step 1/1. The protein operates within amino-acid biosynthesis; L-arginine biosynthesis; N(2)-acetyl-L-ornithine from L-glutamate: step 1/4. In terms of biological role, catalyzes two activities which are involved in the cyclic version of arginine biosynthesis: the synthesis of acetylglutamate from glutamate and acetyl-CoA, and of ornithine by transacetylation between acetylornithine and glutamate. This Lachancea thermotolerans (strain ATCC 56472 / CBS 6340 / NRRL Y-8284) (Yeast) protein is Arginine biosynthesis bifunctional protein ArgJ, mitochondrial.